A 1873-amino-acid chain; its full sequence is Kinesin-related protein 8 (1873 aa).

In terms of domain architecture, Kinesin motor spans 13-413; the sequence is CVRVALRVRP…LKYAYRARNI (401 aa). Position 93–100 (93–100) interacts with ATP; it reads GQTGSGKT. 9 disordered regions span residues 231–302, 463–567, 778–797, 841–891, 930–1008, 1179–1207, 1244–1267, 1328–1360, and 1403–1467; these read NSPV…DERN, VSIP…SPTS, LDKD…YYED, KIDS…ARKT, KQRV…TEQL, PQPL…QRSS, LPSQ…STSS, TTTT…NNSS, and NNIT…PRPD. The span at 232 to 247 shows a compositional bias: low complexity; sequence SPVTSSSTSSTSTSSS. Residues 280–297 are compositionally biased toward acidic residues; it reads IDEDEEDDEEDEDDDIMS. Positions 473 to 567 are enriched in low complexity; it reads TPTLTNNNNN…NNTATPSPTS (95 aa). A coiled-coil region spans residues 715 to 933; sequence FENDSEELSD…KEIEVHKQRV (219 aa). 5 stretches are compositionally biased toward low complexity: residues 937 to 1005, 1182 to 1200, 1244 to 1254, 1348 to 1358, and 1423 to 1454; these read INSK…TPTT, LQSQ…NSEQ, LPSQQQLSSSQ, NNTNNNNNNNN, and SLQS…SNNN. WD repeat units follow at residues 1506–1546, 1548–1587, 1589–1628, 1636–1673, and 1677–1714; these read GHDG…NMLD, SSPG…NTNL, IFKT…KPLK, HHTG…LAQK, and PHHD…NLIN. Positions 1758–1780 are disordered; it reads NNNNNNSSNNNKSSSAPSSTTSS. WD repeat units follow at residues 1805 to 1842 and 1844 to 1873; these read AHND…NSLL and GHES…IWKC.

The protein belongs to the TRAFAC class myosin-kinesin ATPase superfamily. Kinesin family.

Its subcellular location is the cytoplasm. The protein resides in the cytoskeleton. Microtubule-associated force-producing protein that plays a role in organelle transport. Its motor activity is directed toward the microtubule's plus end. Cooperates with kif10 and dynein to organize interphase microtubules. The polypeptide is Kinesin-related protein 8 (kif8) (Dictyostelium discoideum (Social amoeba)).